The chain runs to 1801 residues: U3 small nucleolar RNA-associated protein 10 (1801 aa).

A run of 2 helical transmembrane segments spans residues 102-122 (LALVGGRLLLSPAVKAVEWLI) and 136-156 (ILTFLPYYSTPVFLNLLAILP). The HEAT 1 repeat unit spans residues 581–619 (DVDVQALLPFMLIALADPSERVRSGAVDALANIGKVVDK). 2 consecutive transmembrane segments (helical) span residues 939-959 (IQSGMSYLLSLTLGSLLAIVN) and 995-1015 (ALLLVAGLSVIAPELVLHSVM). 5 HEAT repeats span residues 1038 to 1076 (DQTIDQVVPALIQSLRHQKRDVVSGTSELLLSFTAAFEH), 1110 to 1148 (YSMDKAVLVLMTGLVSDADATVELSTYSKFLNLVGDSLK), 1244 to 1282 (TLTTIDFLDTIEALLKRPDDALRRKVLSLLATRLQQSPE), 1288 to 1327 (QTRMLDFLTVLVDIVQSSPDILLKHAAVTCIDRITEKYGK), and 1756 to 1794 (LALLPEMLPYISELMEDEDEGVEREVRKWVKQIEGVLGE).

This sequence belongs to the HEATR1/UTP10 family. Component of the ribosomal small subunit (SSU) processome.

It is found in the nucleus. Its subcellular location is the nucleolus. The protein resides in the membrane. Involved in nucleolar processing of pre-18S ribosomal RNA. Involved in ribosome biosynthesis. The sequence is that of U3 small nucleolar RNA-associated protein 10 from Emericella nidulans (strain FGSC A4 / ATCC 38163 / CBS 112.46 / NRRL 194 / M139) (Aspergillus nidulans).